A 210-amino-acid polypeptide reads, in one-letter code: GRF1-interacting factor 1 (210 aa).

Residues Ala-135 to Ser-152 are compositionally biased toward low complexity. The tract at residues Ala-135 to Asn-210 is disordered. Positions Gly-182–Gly-198 are enriched in gly residues.

Belongs to the SS18 family. Interacts with GRF1, GRF2, GRF5 and GRF9. As to expression, strongly expressed in actively growing and developing tissues, such as roots, upper stems, and shoot tips and flower buds. Also expressed in mature flowers. Not expressed in the shoot apical meristem (SAM). Highly accumulated in the proximal part of leaf primordia, in the key proliferative zone at the junction region between the leaf blade and leaf petiole.

Transcription coactivator that plays a role in the regulation of cell expansion in leaf and cotyledons tissues. Component of a network formed by miR396, the GRFs and their interacting factors (GIFs) acting in the regulation of meristem function, at least partially through the control of cell proliferation. Appears to function synergistically with GRF1 as a transcriptional coactivator. Acts together with GRF5 for the development of appropriate leaf size and shape through the promotion and/or maintenance of cell proliferation activity in leaf primordia. Plays a role in adaxial/abaxial patterning and growth in leaf morphogenesis. GIFs are involved in the positive regulation of cell proliferation of lateral organs in a functionally redundant manner. Together with GATA18/HAN, mediates cotyledon identity by preventing ectopic root formation through the repression of PLT1 expression. The protein is GRF1-interacting factor 1 of Arabidopsis thaliana (Mouse-ear cress).